The following is a 456-amino-acid chain: Crinkler effector protein 2 (456 aa).

A signal peptide spans 1–17 (MVKLVCAIVGVAGSAFP). Residues 18-54 (VDTDASQLVGDLKKAIKAENAMTFTGDAKDLQLFLAK) are LQLFLAK domain. The segment at 55-136 (QPVDDESGKE…NMELPSSEQI (82 aa)) is DWL domain. Residues 137-143 (HVLVVVP) carry the HVLVXXP motif motif. N338 carries N-linked (GlcNAc...) asparagine glycosylation.

The protein belongs to the Crinkler effector family.

The protein resides in the secreted. Its subcellular location is the host nucleus. Secreted effector that effector that induces cell death when expressed in host plants. Induces the expression of defense response genes in tomato. The polypeptide is Crinkler effector protein 2 (Phytophthora infestans (Potato late blight agent)).